The sequence spans 118 residues: Transcription factor PAR2 (118 aa).

A disordered region spans residues 1–59; that stretch reads MEKTLATSHTKRSSPPSPSSAVNTSSTGFNRRTRQRLSDATASVSETDVEDEDEDEEGV. Residues 19–30 show a composition bias toward polar residues; sequence SSAVNTSSTGFN. Residues 43–92 form the bHLH domain; sequence SVSETDVEDEDEDEEGVEEKIEALQTIVPGGTELGVDALFEETASYILAL. Residues 47–59 are compositionally biased toward acidic residues; it reads TDVEDEDEDEEGV.

Belongs to the bHLH protein family. In terms of assembly, homodimer.

The protein resides in the nucleus. Its function is as follows. Atypical bHLH transcription factor that acts as a negative regulator of a variety of shade avoidance syndrome (SAS) responses, including seedling elongation and photosynthetic pigment accumulation. Acts as a direct transcriptional repressor of two auxin-responsive genes, SAUR15 and SAUR68. May function in integrating shade and hormone transcriptional networks in response to light and auxin changes. The polypeptide is Transcription factor PAR2 (PAR2) (Arabidopsis thaliana (Mouse-ear cress)).